A 483-amino-acid polypeptide reads, in one-letter code: Krueppel-like factor 4 (483 aa).

A disordered region spans residues 22 to 42; the sequence is TFASGPAGREKTLRPAGAPTN. Residue K32 forms a Glycyl lysine isopeptide (Lys-Gly) (interchain with G-Cter in ubiquitin) linkage. The short motif at 99-107 is the 9aaTAD element; sequence DLLDLDFIL. S251 is modified (phosphoserine). The disordered stretch occupies residues 294–395; the sequence is AGPQLSNGHR…KRGRRSWPRK (102 aa). Over residues 338–356 the composition is skewed to pro residues; that stretch reads LPLPPGFHPHPGPNYPPFL. 5-glutamyl polyglutamate is present on E381. The span at 386–395 shows a compositional bias: basic residues; sequence KRGRRSWPRK. An interaction with ZNF296 region spans residues 386–483; the sequence is KRGRRSWPRK…HLALHMKRHF (98 aa). C2H2-type zinc fingers lie at residues 400-424, 430-454, and 460-482; these read HTCDYAGCGKTYTKSSHLKAHLRTH, YHCDWDGCGWKFARSDELTRHYRKH, and FQCQKCDRAFSRSDHLALHMKRH. The interaction with target DNA stretch occupies residues 443–474; it reads RSDELTRHYRKHTGHRPFQCQKCDRAFSRSDH.

It belongs to the krueppel C2H2-type zinc-finger protein family. Interacts with MUC1 (via the C-terminal domain). Interacts with POU5F1/OCT4 and SOX2. Interacts with MEIS2 isoform MeisD and PBX1 isoform PBX1a. Interacts with ZNF296. Interacts with GLIS1. Interacts with BTRC; this interaction leads to KLF4 ubiquitination and subsequent degradation. Interacts with IPO7; the interaction facilitates nuclear translocation of KLF4 in dental papilla cells. Post-translationally, ubiquitinated. 'Lys-48'-linked ubiquitinated and targeted for proteasomal degradation by the SCF(BTRC) E3 ubiquitin-protein ligase complex, thereby negatively regulating cell pluripotency maintenance and embryogenesis. Polyglutamylated by TTLL1 and TTLL4 at Glu-381, which inhibits KLF4 binding with E3 ligase component BTRC, thereby impeding ubiquitination. Deglutamylated by CCP1 and CCP6; deglutamylation promotes KLF4 ubiquitination. KLF4 glutamylation state plays a critical role in the regulation of its function in cell reprogramming, pluripotency maintenance and embryogenesis. As to expression, highest expression in the colon. Lower levels in testis, lung and small intestine.

It is found in the nucleus. The protein resides in the cytoplasm. In terms of biological role, transcription factor; can act both as activator and as repressor. Binds the 5'-CACCC-3' core sequence. Binds to the promoter region of its own gene and can activate its own transcription. Regulates the expression of key transcription factors during embryonic development. Plays an important role in maintaining embryonic stem cells, and in preventing their differentiation. Required for establishing the barrier function of the skin and for postnatal maturation and maintenance of the ocular surface. Involved in the differentiation of epithelial cells and may also function in skeletal and kidney development. Contributes to the down-regulation of p53/TP53 transcription. This Mus musculus (Mouse) protein is Krueppel-like factor 4 (Klf4).